We begin with the raw amino-acid sequence, 21 residues long: Bibrotoxin (21 aa).

Disulfide bonds link C1–C15 and C3–C11.

The protein belongs to the endothelin/sarafotoxin family. As to expression, expressed by the venom gland.

It is found in the secreted. Functionally, vasoconstrictor activity. These toxins cause cardiac arrest probably as a result of coronary vasospasm. May act by displaying agonistic activities towards endothelin-1 and -2 receptors (EDNRA and EDNRB). In Atractaspis bibronii (Bibron's mole viper), this protein is Bibrotoxin.